Here is a 137-residue protein sequence, read N- to C-terminus: Large ribosomal subunit protein uL16 (137 aa).

Belongs to the universal ribosomal protein uL16 family. As to quaternary structure, part of the 50S ribosomal subunit.

Its function is as follows. Binds 23S rRNA and is also seen to make contacts with the A and possibly P site tRNAs. The protein is Large ribosomal subunit protein uL16 of Thioalkalivibrio sulfidiphilus (strain HL-EbGR7).